The sequence spans 181 residues: Regulator of G-protein signaling 5 (181 aa).

One can recognise an RGS domain in the interval Ser64–Ile180.

The protein localises to the cytoplasm. The protein resides in the membrane. In terms of biological role, inhibits signal transduction by increasing the GTPase activity of G protein alpha subunits thereby driving them into their inactive GDP-bound form. Binds to G(i)-alpha and G(o)-alpha, but not to G(s)-alpha. The chain is Regulator of G-protein signaling 5 (Rgs5) from Rattus norvegicus (Rat).